The sequence spans 1152 residues: MLRKVTVAAVCATRRKLCEAGRELAALWGIETRGRCEDSAAVRPFPILAMPGRNKAKSTCSCPDLQPNGQDLGENSRVARLGADESEEEGRRGSLSNAGDPEIVKSPSDPKQYRYIKLQNGLQALLISDLSNMEGKTGNTTDDEEEEEVEEEEEDDDEDSGAEIEDDDEEGFDDEDEFDDEHDDDLDTEDNELEELEERAEARKKKTTEKQSAAALCVGVGSFADPDDLPGLAHFLEHMVFMGSLKYPDENGFDAFLKKHGGSDNASTDCERTVFQFDVQRKYFKEALDRWAQFFIHPLMIRDAIDREVEAVDSEYQLARPSDANRKEMLFGSLARPGHPMGKFFWGNAETLKHEPKKNNIDTHARLREFWLRYYSAHYMTLVVQSKETLDTLEKWVTEIFSQIPNNGLPRPNFGHLTDPFDTPAFNKLYRVVPIRKIHALTITWALPPQQQHYRVKPLHYISWLVGHEGKGSILSFLRKKCWALALFGGNGETGFEQNSTYSVFSISITLTDEGYEHFYEVAYTVFQYLKMLQKLGPEKRIFEEIQKIEDNEFHYQEQTDPVEYVENMCENMQPYPLQDILTGDQLLFEYKPEVIGEALNQLVPQKANLVLLSGANEGKCDLKEKWFGTQYSIEDIENSWAELWNSNFELNPDLHLPAENKYIATDFTLKAFDCPETEYPVKIVNTPQGCLWYKKDNKFKIPKAYIRFHLISPLIQRSAANVVLFDIFANILTHNLAEPAYEADVAQLEYKLVAGEHGLIIRVKGFNHKLPLLFQLIVDYLAEFNSTPAVFTMITEQLKKTYFNILIKPETLAKDVRLLILEYARWSMIDKYQALMDGLSLESLLSFVKEFKSQLFVEGLVQGNVTSTESMDFLKYVVDKLNFKPLEQEMPVQFQVVELPSGHHLCKVKALNKGDANSEVTVYYQSGTRSLREYTLMELLVMHMEEPCFDFLRTKQTLGYHVYPTCRSTSGILGFSVTVGTQATKYNSEVVDKKIEEFLSSFEEKIENLTEEAFNTQVTALIKLKECEDTHLGEEVDRNWNEVVTQQYLFDRLAHEIEALKSFSKSDLVNWFKAHRGPGSKMLSVHVVGYGKYELEEDGTPSSEDSNSSCEVMQLTYLPTSPLLADCIIPITDIRAFTTTLNLLPYHKIVK.

An N-terminal signal peptide occupies residues 1–20 (MLRKVTVAAVCATRRKLCEA). Disordered stretches follow at residues 81 to 108 (LGAD…KSPS) and 133 to 208 (MEGK…KKTT). Phosphoserine is present on residues Ser86, Ser94, and Ser96. Acidic residues predominate over residues 141–198 (TDDEEEEEVEEEEEDDDEDSGAEIEDDDEEGFDDEDEFDDEHDDDLDTEDNELEELEE). Position 234 (His234) interacts with Zn(2+). Residue Glu237 is the Proton acceptor of the active site. Zn(2+) is bound by residues His238 and Glu315.

Belongs to the peptidase M16 family. In terms of assembly, interacts with BACE1 and NRG1. Requires Zn(2+) as cofactor.

The protein localises to the mitochondrion. It localises to the cell projection. It is found in the dendrite. It carries out the reaction Hydrolysis of polypeptides, preferably at -Xaa-|-Arg-Lys-, and less commonly at -Arg-|-Arg-Xaa-, in which Xaa is not Arg or Lys.. In terms of biological role, cleaves peptide substrates on the N-terminus of arginine residues in dibasic pairs. Is a critical activator of BACE1- and ADAM17-mediated pro-neuregulin ectodomain shedding, involved in the positive regulation of axonal maturation and myelination. Required for proper functioning of 2-oxoglutarate dehydrogenase (OGDH). In Pongo abelii (Sumatran orangutan), this protein is Nardilysin.